The primary structure comprises 693 residues: Follicle-stimulating hormone receptor (693 aa).

Residues 1 to 18 form the signal peptide; it reads MFLVFTCSLILLASCSSC. 2 disulfides stabilise this stretch: C18–C25 and C23–C32. The LRRNT domain maps to 19-46; sequence QHHTCHCAGRIFICQESKVVQLPRDIPT. Residues 19–366 lie on the Extracellular side of the membrane; sequence QHHTCHCAGR…EDIMGYTILR (348 aa). N47 is a glycosylation site (N-linked (GlcNAc...) asparagine). LRR repeat units follow at residues 49-72, 73-97, 98-118, 119-143, 144-169, 170-192, 193-216, 217-240, and 241-259; these read TELR…LLDL, EKIE…LPKL, HEIR…AFQH, LPSL…KVHS, FQKV…MGLS, SESV…AFNG, TYLD…VFQG, ANGP…GLEL, and IKKL…PDLS. N-linked (GlcNAc...) asparagine glycosylation is found at N191 and N199. Residue N268 is glycosylated (N-linked (GlcNAc...) asparagine). 4 disulfide bridges follow: C275–C346, C276–C292, C276–C356, and C292–C338. A helical membrane pass occupies residues 367-387; the sequence is VLIWFISILAITGNIVVLIIL. The Cytoplasmic segment spans residues 388 to 398; sequence ISSQYKLTVPR. The chain crosses the membrane as a helical span at residues 399–421; the sequence is FLMCNLAFADLCIGIYLLFIASV. Residues 422-443 are Extracellular-facing; it reads DIQTKSQYYNYAIDWQTGAGCN. A disulfide bridge connects residues C442 and C517. Residues 444-465 form a helical membrane-spanning segment; it reads AAGFFTVFASELSVYTLTVITL. At 466 to 485 the chain is on the cytoplasmic side; sequence ERWHTITYAMQLDRKVRFRH. A helical transmembrane segment spans residues 486–508; it reads AVIIMIFGWMFAFTVALLPIFGV. Topologically, residues 509-528 are extracellular; it reads SSYMKVSICLPMDIETPFSQ. A helical membrane pass occupies residues 529 to 550; that stretch reads AYVIFLLVLNVLAFVIICACYI. At 551 to 573 the chain is on the cytoplasmic side; sequence CIYFTVRNPNVISSNSDTKIAKR. The chain crosses the membrane as a helical span at residues 574–597; that stretch reads MAILIFTDFLCMAPISFFAISASL. Residues 598–608 lie on the Extracellular side of the membrane; the sequence is KVPLITVSKSK. A helical membrane pass occupies residues 609–630; sequence ILLVLFYPINSCANPFLYAIFT. The Cytoplasmic portion of the chain corresponds to 631–693; sequence KTFRRDFFIL…YSLVPLNHLN (63 aa).

The protein belongs to the G-protein coupled receptor 1 family. FSH/LSH/TSH subfamily. As to quaternary structure, homotrimer. Functions as a homotrimer binding the FSH hormone heterodimer composed of CGA and FSHB.

It is found in the cell membrane. G protein-coupled receptor for follitropin, the follicle-stimulating hormone. Through cAMP production activates the downstream PI3K-AKT and ERK1/ERK2 signaling pathways. This chain is Follicle-stimulating hormone receptor (FSHR), found in Cairina moschata (Muscovy duck).